The primary structure comprises 812 residues: Probable inorganic carbon transporter subunit DabA (812 aa).

Zn(2+) contacts are provided by Cys338, Asp340, His498, and Cys513.

It belongs to the inorganic carbon transporter (TC 9.A.2) DabA family. In terms of assembly, forms a complex with DabB. It depends on Zn(2+) as a cofactor.

Its subcellular location is the cell inner membrane. Part of an energy-coupled inorganic carbon pump. The sequence is that of Probable inorganic carbon transporter subunit DabA from Methylobacterium sp. (strain 4-46).